Here is a 255-residue protein sequence, read N- to C-terminus: Indole-3-glycerol phosphate synthase (255 aa).

It belongs to the TrpC family.

The catalysed reaction is 1-(2-carboxyphenylamino)-1-deoxy-D-ribulose 5-phosphate + H(+) = (1S,2R)-1-C-(indol-3-yl)glycerol 3-phosphate + CO2 + H2O. It functions in the pathway amino-acid biosynthesis; L-tryptophan biosynthesis; L-tryptophan from chorismate: step 4/5. The protein is Indole-3-glycerol phosphate synthase of Shouchella clausii (strain KSM-K16) (Alkalihalobacillus clausii).